The following is a 22-amino-acid chain: Lantibiotic mutacin B-Ny266 (22 aa).

The segment at residues Ser3–Cys7 is a cross-link (lanthionine (Ser-Cys)). A 2,3-didehydroalanine (Ser) modification is found at Ser5. A cross-link (beta-methyllanthionine (Thr-Cys)) is located at residues Thr8–Cys11. At Thr14 the chain carries 2,3-didehydrobutyrine. Residues Ser16 to Cys21 constitute a cross-link (lanthionine (Ser-Cys)). A cross-link (S-(2-aminovinyl)-D-cysteine (Ser-Cys)) is located at residues Ser19 to Cys22.

Post-translationally, maturation of lantibiotics involves the enzymatic conversion of Thr, and Ser into dehydrated AA and the formation of thioether bonds with cysteine. The C-terminal lanthionine undergoes decarboxylation. This is followed by membrane translocation and cleavage of the modified precursor. In terms of processing, it is not established whether the 2,3-didehydrobutyrine is the E- or Z-isomer.

In terms of biological role, lanthionine-containing peptide antibiotic (lantibiotic) active on Gram-positive bacteria. The bactericidal activity of lantibiotics is based on depolarization of energized bacterial cytoplasmic membranes, initiated by the formation of aqueous transmembrane pores. The protein is Lantibiotic mutacin B-Ny266 of Streptococcus mutans.